Consider the following 114-residue polypeptide: WRMLWEHNSTIVVMLTKLREMGRDKCHQYWPAERSARYQYFVVDPMSEYSMHQYILREFKVTDARDGQSRTVRQFQFTDWPEQGVPKSGEGFIDFIGQVHKTKEQFGQEGPITI.

The Tyrosine-protein phosphatase domain maps to 1–114; the sequence is WRMLWEHNST…QFGQEGPITI (114 aa). Glu-82 serves as a coordination point for substrate.

It belongs to the protein-tyrosine phosphatase family.

It catalyses the reaction O-phospho-L-tyrosyl-[protein] + H2O = L-tyrosyl-[protein] + phosphate. In Styela plicata (Wrinkled sea squirt), this protein is Tyrosine-protein phosphatase 13 (STY-13).